The chain runs to 125 residues: Large ribosomal subunit protein bL12 (125 aa).

It belongs to the bacterial ribosomal protein bL12 family. As to quaternary structure, homodimer. Part of the ribosomal stalk of the 50S ribosomal subunit. Forms a multimeric L10(L12)X complex, where L10 forms an elongated spine to which 2 to 4 L12 dimers bind in a sequential fashion. Binds GTP-bound translation factors.

In terms of biological role, forms part of the ribosomal stalk which helps the ribosome interact with GTP-bound translation factors. Is thus essential for accurate translation. The polypeptide is Large ribosomal subunit protein bL12 (Rickettsia canadensis (strain McKiel)).